Consider the following 498-residue polypeptide: ATP synthase subunit beta, chloroplastic (498 aa).

172–179 (GGAGVGKT) provides a ligand contact to ATP.

This sequence belongs to the ATPase alpha/beta chains family. In terms of assembly, F-type ATPases have 2 components, CF(1) - the catalytic core - and CF(0) - the membrane proton channel. CF(1) has five subunits: alpha(3), beta(3), gamma(1), delta(1), epsilon(1). CF(0) has four main subunits: a(1), b(1), b'(1) and c(9-12).

Its subcellular location is the plastid. The protein localises to the chloroplast thylakoid membrane. The catalysed reaction is ATP + H2O + 4 H(+)(in) = ADP + phosphate + 5 H(+)(out). Produces ATP from ADP in the presence of a proton gradient across the membrane. The catalytic sites are hosted primarily by the beta subunits. This Aspidistra elatior (Cast-iron plant) protein is ATP synthase subunit beta, chloroplastic.